We begin with the raw amino-acid sequence, 179 residues long: Acireductone dioxygenase (179 aa).

4 residues coordinate Fe(2+): His-88, His-90, Glu-94, and His-133. Ni(2+) is bound by residues His-88, His-90, Glu-94, and His-133.

This sequence belongs to the acireductone dioxygenase (ARD) family. Monomer. Interacts with MMP14. Fe(2+) serves as cofactor. Requires Ni(2+) as cofactor.

It is found in the cytoplasm. Its subcellular location is the nucleus. The protein localises to the cell membrane. The catalysed reaction is 1,2-dihydroxy-5-(methylsulfanyl)pent-1-en-3-one + O2 = 4-methylsulfanyl-2-oxobutanoate + formate + 2 H(+). The enzyme catalyses 1,2-dihydroxy-5-(methylsulfanyl)pent-1-en-3-one + O2 = 3-(methylsulfanyl)propanoate + CO + formate + 2 H(+). Its pathway is amino-acid biosynthesis; L-methionine biosynthesis via salvage pathway; L-methionine from S-methyl-5-thio-alpha-D-ribose 1-phosphate: step 5/6. Its function is as follows. Catalyzes 2 different reactions between oxygen and the acireductone 1,2-dihydroxy-3-keto-5-methylthiopentene (DHK-MTPene) depending upon the metal bound in the active site. Fe-containing acireductone dioxygenase (Fe-ARD) produces formate and 2-keto-4-methylthiobutyrate (KMTB), the alpha-ketoacid precursor of methionine in the methionine recycle pathway. Ni-containing acireductone dioxygenase (Ni-ARD) produces methylthiopropionate, carbon monoxide and formate, and does not lie on the methionine recycle pathway. Also down-regulates cell migration mediated by MMP14. This Macaca mulatta (Rhesus macaque) protein is Acireductone dioxygenase.